The chain runs to 404 residues: Cysteine desulfurase IscS (404 aa).

Pyridoxal 5'-phosphate is bound by residues 75-76 (AT), asparagine 155, glutamine 183, and 203-205 (SGH). Lysine 206 bears the N6-(pyridoxal phosphate)lysine mark. Residue threonine 243 coordinates pyridoxal 5'-phosphate. The active-site Cysteine persulfide intermediate is cysteine 328. Cysteine 328 contributes to the [2Fe-2S] cluster binding site.

This sequence belongs to the class-V pyridoxal-phosphate-dependent aminotransferase family. NifS/IscS subfamily. Homodimer. Forms a heterotetramer with IscU, interacts with other sulfur acceptors. Pyridoxal 5'-phosphate serves as cofactor.

The protein resides in the cytoplasm. The catalysed reaction is (sulfur carrier)-H + L-cysteine = (sulfur carrier)-SH + L-alanine. The protein operates within cofactor biosynthesis; iron-sulfur cluster biosynthesis. Master enzyme that delivers sulfur to a number of partners involved in Fe-S cluster assembly, tRNA modification or cofactor biosynthesis. Catalyzes the removal of elemental sulfur atoms from cysteine to produce alanine. Functions as a sulfur delivery protein for Fe-S cluster synthesis onto IscU, an Fe-S scaffold assembly protein, as well as other S acceptor proteins. This chain is Cysteine desulfurase IscS, found in Klebsiella pneumoniae (strain 342).